Here is a 305-residue protein sequence, read N- to C-terminus: Aspartate carbamoyltransferase catalytic subunit (305 aa).

2 residues coordinate carbamoyl phosphate: Arg56 and Thr57. Residue Lys85 participates in L-aspartate binding. Carbamoyl phosphate is bound by residues Arg106, His134, and Gln137. 2 residues coordinate L-aspartate: Arg167 and Arg227. Carbamoyl phosphate-binding residues include Leu266 and Pro267.

The protein belongs to the aspartate/ornithine carbamoyltransferase superfamily. ATCase family. Heterooligomer of catalytic and regulatory chains.

The enzyme catalyses carbamoyl phosphate + L-aspartate = N-carbamoyl-L-aspartate + phosphate + H(+). Its pathway is pyrimidine metabolism; UMP biosynthesis via de novo pathway; (S)-dihydroorotate from bicarbonate: step 2/3. Its function is as follows. Catalyzes the condensation of carbamoyl phosphate and aspartate to form carbamoyl aspartate and inorganic phosphate, the committed step in the de novo pyrimidine nucleotide biosynthesis pathway. This Thermoplasma volcanium (strain ATCC 51530 / DSM 4299 / JCM 9571 / NBRC 15438 / GSS1) protein is Aspartate carbamoyltransferase catalytic subunit.